The chain runs to 317 residues: Tumor necrosis factor ligand superfamily member 11 (317 aa).

Residues 1-16 show a composition bias toward basic and acidic residues; the sequence is MRRASRDYTKYLRGSE. The interval 1 to 43 is disordered; the sequence is MRRASRDYTKYLRGSEEMGGGPGAPHEGPLHAPPPPAPHQPPA. The Cytoplasmic segment spans residues 1–47; the sequence is MRRASRDYTKYLRGSEEMGGGPGAPHEGPLHAPPPPAPHQPPAASRS. Pro residues predominate over residues 31–41; sequence HAPPPPAPHQP. The helical; Signal-anchor for type II membrane protein transmembrane segment at 48–68 threads the bilayer; the sequence is MFVALLGLGLGQVVCSVALFF. Topologically, residues 69-317 are extracellular; the sequence is YFRAQMDPNR…FGAFKVRDID (249 aa). The THD domain occupies 164-313; sequence PFAHLTINAT…DATYFGAFKV (150 aa). N-linked (GlcNAc...) asparagine glycosylation is found at N171 and N198.

Belongs to the tumor necrosis factor family. As to quaternary structure, homotrimer. Interacts with TNFRSF11B. Interacts with TNFRSF11A. Interacts with FBN1 (via N-terminal domain) in a Ca(+2)-dependent manner. Interacts with TNFAIP6 (via both Link and CUB domains). The soluble form of isoform 1 derives from the membrane form by proteolytic processing. The cleavage may be catalyzed by ADAM17. In terms of tissue distribution, highest in the peripheral lymph nodes, weak in spleen, peripheral blood Leukocytes, bone marrow, heart, placenta, skeletal muscle, stomach and thyroid.

Its subcellular location is the cell membrane. The protein localises to the cytoplasm. It localises to the secreted. Functionally, cytokine that binds to TNFRSF11B/OPG and to TNFRSF11A/RANK. Osteoclast differentiation and activation factor. Augments the ability of dendritic cells to stimulate naive T-cell proliferation. May be an important regulator of interactions between T-cells and dendritic cells and may play a role in the regulation of the T-cell-dependent immune response. May also play an important role in enhanced bone-resorption in humoral hypercalcemia of malignancy. Induces osteoclastogenesis by activating multiple signaling pathways in osteoclast precursor cells, chief among which is induction of long lasting oscillations in the intracellular concentration of Ca (2+) resulting in the activation of NFATC1, which translocates to the nucleus and induces osteoclast-specific gene transcription to allow differentiation of osteoclasts. During osteoclast differentiation, in a TMEM64 and ATP2A2-dependent manner induces activation of CREB1 and mitochondrial ROS generation necessary for proper osteoclast generation. In Homo sapiens (Human), this protein is Tumor necrosis factor ligand superfamily member 11 (TNFSF11).